Reading from the N-terminus, the 98-residue chain is N(2)-fixation sustaining protein CowN (98 aa).

Belongs to the CowN family.

In terms of biological role, is required to sustain N(2)-dependent growth in the presence of low levels of carbon monoxide (CO). Probably acts by protecting the N(2) fixation ability of the nitrogenase complex, which is inactivated in the presence of CO. The polypeptide is N(2)-fixation sustaining protein CowN (Dechloromonas aromatica (strain RCB)).